A 500-amino-acid polypeptide reads, in one-letter code: Neuronal pentraxin receptor (500 aa).

Residues 1–2 (MK) are Cytoplasmic-facing. A helical; Signal-anchor for type II membrane protein transmembrane segment spans residues 3–23 (FLAVLLAAGMLAFLGAVICII). Over 24-500 (ASVPLAASPA…FDVCKGRAKA (477 aa)) the chain is Extracellular. N42 carries an N-linked (GlcNAc...) asparagine glycan. The span at 42-63 (NASVASGAAASPGPQRSLSALH) shows a compositional bias: low complexity. Disordered regions lie at residues 42–81 (NASV…PAAS) and 162–183 (ESGL…ADGP). An N-linked (GlcNAc...) asparagine glycan is attached at N216. Residues 292 to 494 (DAFKISIPIR…GATKAAFDVC (203 aa)) enclose the Pentraxin (PTX) domain. The cysteines at positions 322 and 383 are disulfide-linked. Positions 347, 425, 426, 427, and 437 each coordinate Ca(2+). The N-linked (GlcNAc...) asparagine glycan is linked to N463.

In terms of assembly, heteropentamer with NPTX1 and/or NPTX2. Also binds taipoxin-associated calcium-binding protein 49 (TCBP49/RCN2). Interacts with KLHL2. It depends on Ca(2+) as a cofactor. In terms of processing, ubiquitinated by a cullin-RING-based BCR (BTB-CUL3-RBX1) E3 ubiquitin-protein ligase complex containing KLHL2.

It localises to the membrane. Its function is as follows. May be involved in mediating uptake of synaptic material during synapse remodeling or in mediating the synaptic clustering of AMPA glutamate receptors at a subset of excitatory synapses. The protein is Neuronal pentraxin receptor (NPTXR) of Homo sapiens (Human).